The chain runs to 464 residues: 3-isopropylmalate dehydratase large subunit (464 aa).

The [4Fe-4S] cluster site is built by Cys337, Cys397, and Cys400.

The protein belongs to the aconitase/IPM isomerase family. LeuC type 1 subfamily. In terms of assembly, heterodimer of LeuC and LeuD. It depends on [4Fe-4S] cluster as a cofactor.

It carries out the reaction (2R,3S)-3-isopropylmalate = (2S)-2-isopropylmalate. It participates in amino-acid biosynthesis; L-leucine biosynthesis; L-leucine from 3-methyl-2-oxobutanoate: step 2/4. Catalyzes the isomerization between 2-isopropylmalate and 3-isopropylmalate, via the formation of 2-isopropylmaleate. The protein is 3-isopropylmalate dehydratase large subunit of Bacillus thuringiensis subsp. konkukian (strain 97-27).